The primary structure comprises 104 residues: Guanidinium exporter (104 aa).

Residue Met-1 is a topological domain, cytoplasmic. Residues 2-19 form a helical membrane-spanning segment; sequence AWIILVIAGLLEVIWAIG. Over 20–28 the chain is Periplasmic; the sequence is LKYSHGFSR. Residues 29 to 48 traverse the membrane as a helical segment; that stretch reads LTPSIITLVAMAASVFLLAY. Topologically, residues 49 to 54 are cytoplasmic; it reads AMKSLP. The chain crosses the membrane as a helical span at residues 55 to 77; the sequence is AGTAYAVWTGIGAVGTAILGIVL. Residues 78-81 lie on the Periplasmic side of the membrane; that stretch reads LGES. The chain crosses the membrane as a helical span at residues 82-100; sequence ASLARILSLGLILAGIIGL. The Cytoplasmic segment spans residues 101–104; that stretch reads KLAS.

Belongs to the drug/metabolite transporter (DMT) superfamily. Small multidrug resistance (SMR) (TC 2.A.7.1) family. Gdx/SugE subfamily.

It is found in the cell inner membrane. Its function is as follows. Guanidinium ion exporter. Couples guanidinium export to the proton motive force, exchanging one guanidinium ion for two protons. This is Guanidinium exporter from Yersinia pestis.